The primary structure comprises 310 residues: Ribosomal RNA small subunit methyltransferase H (310 aa).

Residues 35 to 37 (GGH), aspartate 52, phenylalanine 79, aspartate 100, and glutamine 107 each bind S-adenosyl-L-methionine.

Belongs to the methyltransferase superfamily. RsmH family.

Its subcellular location is the cytoplasm. It catalyses the reaction cytidine(1402) in 16S rRNA + S-adenosyl-L-methionine = N(4)-methylcytidine(1402) in 16S rRNA + S-adenosyl-L-homocysteine + H(+). In terms of biological role, specifically methylates the N4 position of cytidine in position 1402 (C1402) of 16S rRNA. The sequence is that of Ribosomal RNA small subunit methyltransferase H from Anaeromyxobacter sp. (strain K).